Consider the following 350-residue polypeptide: Small ribosomal subunit biogenesis GTPase RsgA (350 aa).

Positions 1–30 are disordered; that stretch reads MSKRKLTQNQQRRIQSNNAKTLHRHQHRHK. The span at 7–20 shows a compositional bias: polar residues; it reads TQNQQRRIQSNNAK. A compositionally biased stretch (basic residues) spans 21-30; that stretch reads TLHRHQHRHK. The CP-type G domain maps to 106–274; sequence HNQIVRPDYY…LIDSPGIREF (169 aa). Residues 162–165 and 216–224 contribute to the GTP site; these read NKAD and GQSGVGKSS. Residues Cys298, Cys303, His305, and Cys311 each contribute to the Zn(2+) site.

It belongs to the TRAFAC class YlqF/YawG GTPase family. RsgA subfamily. As to quaternary structure, monomer. Associates with 30S ribosomal subunit, binds 16S rRNA. The cofactor is Zn(2+).

The protein resides in the cytoplasm. In terms of biological role, one of several proteins that assist in the late maturation steps of the functional core of the 30S ribosomal subunit. Helps release RbfA from mature subunits. May play a role in the assembly of ribosomal proteins into the subunit. Circularly permuted GTPase that catalyzes slow GTP hydrolysis, GTPase activity is stimulated by the 30S ribosomal subunit. The sequence is that of Small ribosomal subunit biogenesis GTPase RsgA from Histophilus somni (strain 129Pt) (Haemophilus somnus).